Reading from the N-terminus, the 466-residue chain is Xanthine permease XanQ (466 aa).

Over 1–44 (MSDINHAGSDLIFELEDRPPFHQALVGAITHLLAIFVPMVTPAL) the chain is Cytoplasmic. Residues 45-65 (IVGAALQLSAETTAYLVSMAM) traverse the membrane as a helical segment. At 66–74 (IASGIGTWL) the chain is on the periplasmic side. A helical transmembrane segment spans residues 75-95 (QVNRYGIVGSGLLSIQSVNFS). At 96 to 99 (FVTV) the chain is on the cytoplasmic side. Residues 100–120 (MIALGSSMKSDGFHEELIMSS) form a helical membrane-spanning segment. Topologically, residues 121–139 (LLGVSFVGAFLVVGSSFIL) are periplasmic. A helical membrane pass occupies residues 140–160 (PYLRRVITPTVSGIVVLMIGL). The Cytoplasmic portion of the chain corresponds to 161 to 170 (SLIKVGIIDF). Residues 171 to 191 (GGGFAAKSSGTFGNYEHLGVG) form a helical membrane-spanning segment. Residues 192–199 (LLVLIVVI) are Periplasmic-facing. Residues 200 to 220 (GFNCCRSPLLRMGGIAIGLCV) form a helical membrane-spanning segment. Residues 221–229 (GYIASLCLG) lie on the Cytoplasmic side of the membrane. A helical membrane pass occupies residues 230–250 (MVDFSSMRNLPLITIPHPFKY). Residues 251–277 (GFSFSFHQFLVVGTIYLLSVLEAVGDI) are Periplasmic-facing. The helical transmembrane segment at 278 to 298 (TATAMVSRRPIQGEEYQSRLK) threads the bilayer. Topologically, residues 299–317 (GGVLADGLVSVIASAVGSL) are cytoplasmic. A helical transmembrane segment spans residues 318-338 (PLTTFAQNNGVIQMTGVASRY). Residues 339–361 (VGRTIAVMLVILGLFPMIGGFFT) lie on the Periplasmic side of the membrane. Residues 362–382 (TIPSAVLGGAMTLMFSMIAIA) form a helical membrane-spanning segment. A topological domain (cytoplasmic) is located at residue Gly-383. Residues 384–403 (IRIIITNGLKRRETLIVATS) traverse the membrane as a helical segment. The Periplasmic segment spans residues 404-444 (LGLGLGVSYDPEIFKILPASIYVLVENPICAGGLTAILLNI). Residues 445–465 (ILPGGYRQENVLPGITSAEEM) traverse the membrane as a helical segment. Residue Asp-466 is a topological domain, cytoplasmic.

Belongs to the nucleobase:cation symporter-2 (NCS2) (TC 2.A.40) family.

It localises to the cell inner membrane. It carries out the reaction xanthine(in) + H(+)(in) = xanthine(out) + H(+)(out). In terms of biological role, specific, proton motive force-dependent high-affinity transporter for xanthine. This chain is Xanthine permease XanQ (xanQ), found in Escherichia coli O157:H7.